A 538-amino-acid polypeptide reads, in one-letter code: Syncytin-2 (538 aa).

Residues 1-15 (MGLLLLVLILTPLLA) form the signal peptide. The Extracellular portion of the chain corresponds to 31–478 (LLQSTGSPYS…GWLNWEGTWK (448 aa)). A CXXC motif is present at residues 43–46 (CWLC). Cystine bridges form between Cys43-Cys46, Cys43-Cys439, and Cys431-Cys438. Residues Asn133, Asn146, Asn177, Asn220, Asn241, Asn247, Asn312, and Asn332 are each glycosylated (N-linked (GlcNAc...) asparagine). The fusion peptide stretch occupies residues 354–374 (FIPLLAGLGILAGTGTGIAGI). Residues 414–430 (LQNRRGLDMLTAAQGGI) carry the CKS-17 motif. The CX6CC motif lies at 431 to 439 (CLALDEKCC). A glycan (N-linked (GlcNAc...) asparagine) is linked at Asn443. The helical transmembrane segment at 479 to 499 (WFSWVLPFIGPFVSLLLLLLF) threads the bilayer. Residues 500–538 (GPCLLNLITQFVSSRLQAIKLQTNLSAGRRPRTIQESPF) are Cytoplasmic-facing.

Belongs to the gamma type-C retroviral envelope protein family. HERV class-I FRD env subfamily. As to quaternary structure, the surface and transmembrane proteins form a heterodimer. They are attached by non-covalent interactions or by a labile interchain disulfide bond. In terms of processing, specific enzymatic cleavages in vivo yield the mature SU and TM proteins. Post-translationally, the CXXC motif is highly conserved across a broad range of retroviral envelope proteins. It is thought to participate in the formation of a labile disulfide bond possibly with the CX6CC motif present in the transmembrane protein.

It is found in the cell membrane. Its function is as follows. This endogenous retroviral envelope protein has retained its original fusogenic properties and participates in trophoblast fusion and the formation of a syncytium during placenta morphogenesis. The interaction with MFSD2A is apparently important for this process. In terms of biological role, endogenous envelope proteins may have kept, lost or modified their original function during evolution and this one is unable to confer infectivity. The protein is Syncytin-2 (ERVFRD-1) of Hylobates moloch (Silvery gibbon).